Reading from the N-terminus, the 125-residue chain is Ribonuclease P protein component (125 aa).

Belongs to the RnpA family. As to quaternary structure, consists of a catalytic RNA component (M1 or rnpB) and a protein subunit.

The catalysed reaction is Endonucleolytic cleavage of RNA, removing 5'-extranucleotides from tRNA precursor.. Its function is as follows. RNaseP catalyzes the removal of the 5'-leader sequence from pre-tRNA to produce the mature 5'-terminus. It can also cleave other RNA substrates such as 4.5S RNA. The protein component plays an auxiliary but essential role in vivo by binding to the 5'-leader sequence and broadening the substrate specificity of the ribozyme. This Clostridium botulinum (strain Alaska E43 / Type E3) protein is Ribonuclease P protein component.